The primary structure comprises 111 residues: uncharacterized protein (111 aa).

It is found in the cytoplasm. The protein resides in the nucleus. This is an uncharacterized protein from Schizosaccharomyces pombe (strain 972 / ATCC 24843) (Fission yeast).